The chain runs to 271 residues: Ribosomal RNA small subunit methyltransferase A (271 aa).

S-adenosyl-L-methionine contacts are provided by His-18, Leu-20, Gly-45, Glu-66, Asp-91, and Asn-113.

Belongs to the class I-like SAM-binding methyltransferase superfamily. rRNA adenine N(6)-methyltransferase family. RsmA subfamily.

It localises to the cytoplasm. The enzyme catalyses adenosine(1518)/adenosine(1519) in 16S rRNA + 4 S-adenosyl-L-methionine = N(6)-dimethyladenosine(1518)/N(6)-dimethyladenosine(1519) in 16S rRNA + 4 S-adenosyl-L-homocysteine + 4 H(+). Its function is as follows. Specifically dimethylates two adjacent adenosines (A1518 and A1519) in the loop of a conserved hairpin near the 3'-end of 16S rRNA in the 30S particle. May play a critical role in biogenesis of 30S subunits. The chain is Ribosomal RNA small subunit methyltransferase A from Baumannia cicadellinicola subsp. Homalodisca coagulata.